The following is a 359-amino-acid chain: Membrane-bound lytic murein transglycosylase C (359 aa).

The signal sequence occupies residues 1 to 16 (MKKYLALALIAPLLIS). C17 is lipidated: N-palmitoyl cysteine. C17 is lipidated: S-diacylglycerol cysteine.

Belongs to the transglycosylase Slt family.

The protein localises to the cell outer membrane. The catalysed reaction is Exolytic cleavage of the (1-&gt;4)-beta-glycosidic linkage between N-acetylmuramic acid (MurNAc) and N-acetylglucosamine (GlcNAc) residues in peptidoglycan, from either the reducing or the non-reducing ends of the peptidoglycan chains, with concomitant formation of a 1,6-anhydrobond in the MurNAc residue.. Functionally, murein-degrading enzyme. May play a role in recycling of muropeptides during cell elongation and/or cell division. This chain is Membrane-bound lytic murein transglycosylase C, found in Shigella dysenteriae serotype 1 (strain Sd197).